The sequence spans 264 residues: MSDGGAPTVEFLRHGGRIAMAHRGFTSFRLPMNSMGAFQEAAKLGFRYIETDVRATRDGVAVILHDRRLAPGVGLSGAVDRLDWRDVRKAQLGAGQSIPTLEDLLTALPDMRVNIDIKAASAIEPTVNVIERCNAHNRVLIGSFSERRRRRALRLLTKRVASSAGTGALLAWLTARPLGSRAYAWRMMRDIDCVQLPSRLGGVPVITPARVRGFHAAGRQVHAWTVDEPDVMHTLLDMDVDGIITDRADLLRDVLIARGEWDGA.

Residues 17–255 (RIAMAHRGFT…DRADLLRDVL (239 aa)) form the GP-PDE domain. Catalysis depends on H22, which acts as the Proton acceptor. A divalent metal cation-binding residues include E50, D52, and H65. Catalysis depends on H65, which acts as the Proton donor.

The protein belongs to the glycerophosphoryl diester phosphodiesterase family. A divalent metal cation serves as cofactor.

The catalysed reaction is a sn-glycero-3-phosphodiester + H2O = an alcohol + sn-glycerol 3-phosphate + H(+). Its function is as follows. Glycerophosphodiester phosphodiesterase hydrolyzes glycerophosphodiesters into glycerol-3-phosphate (G3P) and the corresponding alcohol. This Mycobacterium tuberculosis (strain ATCC 25618 / H37Rv) protein is Probable glycerophosphodiester phosphodiesterase 2.